Consider the following 86-residue polypeptide: Small ribosomal subunit protein uS15 (86 aa).

A disordered region spans residues 1–22; that stretch reads MSVDTQKVIEDNKRSAQDTGSP. The segment covering 7–16 has biased composition (basic and acidic residues); sequence KVIEDNKRSA.

It belongs to the universal ribosomal protein uS15 family. Part of the 30S ribosomal subunit. Forms a bridge to the 50S subunit in the 70S ribosome, contacting the 23S rRNA.

Its function is as follows. One of the primary rRNA binding proteins, it binds directly to 16S rRNA where it helps nucleate assembly of the platform of the 30S subunit by binding and bridging several RNA helices of the 16S rRNA. Functionally, forms an intersubunit bridge (bridge B4) with the 23S rRNA of the 50S subunit in the ribosome. This Xanthomonas campestris pv. campestris (strain 8004) protein is Small ribosomal subunit protein uS15.